A 496-amino-acid chain; its full sequence is Probable diguanylate cyclase DgcJ (496 aa).

The next 2 helical transmembrane spans lie at 11–31 (FIAASVIVLTSSFLIFELVAS) and 305–325 (ILYFITSSWKSVLFWILTALI). The 123-residue stretch at 374-496 (SSVMFIAIDM…VNKQNKNSRS (123 aa)) folds into the GGDEF domain. Aspartate 382 contacts Mg(2+). Residues asparagine 390, histidine 395, and aspartate 399 each coordinate substrate. Aspartate 425 contributes to the Mg(2+) binding site. The active-site Proton acceptor is the aspartate 425.

In terms of assembly, homodimer. Requires Mg(2+) as cofactor.

The protein resides in the cell inner membrane. It catalyses the reaction 2 GTP = 3',3'-c-di-GMP + 2 diphosphate. The protein operates within purine metabolism; 3',5'-cyclic di-GMP biosynthesis. In terms of biological role, catalyzes the synthesis of cyclic-di-GMP (c-di-GMP) via the condensation of 2 GTP molecules. The sequence is that of Probable diguanylate cyclase DgcJ from Escherichia coli (strain K12).